The chain runs to 574 residues: ATP-grasp enzyme fsqD (574 aa).

The 229-residue stretch at 234–462 folds into the ATP-grasp domain; it reads NKFLTSKYVG…YWGLAAVLGV (229 aa). An ATP-binding site is contributed by 263–318; the sequence is ALPYPLIVKPCDGWSSEGVSRVESPDAFPAAVKSIDTSRHGTEFVMEPYCDGPEVD. Mg(2+) is bound by residues glutamate 394, glutamate 431, and asparagine 433. 3 residues coordinate Mn(2+): glutamate 394, glutamate 431, and asparagine 433.

Mg(2+) serves as cofactor. Mn(2+) is required as a cofactor.

It participates in secondary metabolite biosynthesis. Its function is as follows. ATP-grasp enzyme; part of the gene cluster that mediates the biosynthesis of the isoquinoline alkaloids fumisoquin A, fumisoquin B and fumisoquin C; as well as small amounts of fumipyrrole as a shunt metabolite. The products of the cluster lead to a brown coloration and are important for growth and conidiation. The nonribosomal peptide synthetase-like protein fsqF, which lacks a canonical condensation domain, is required for addition of a serine-derived dehydroalanine moiety to activated tyrosine but is not essential for the subsequent steps leading to isoquinoline formation. A different enzyme, most likely the ATP-grasp enzyme fsqD, is responsible for activation of tyrosine. Three additional enzymes encoded by the fsq cluster, the N-methyltransferase fsqC, the phenol 2-monooxygenase fsqG and the FAD-dependent oxidase fsqB, catalyze the formation of the isoquinoline ring system in the fumisoquins. FsqB converts the fspF thiolation domain-bound (2S,4S,5S)-2-amino-6-(3,4-dihydroxyphenyl)-4-hydroxy-5-(methylamino)hexanoyl into isoquinoline. The cyclization most likely proceeds via a two-step mechanism, beginning with FAD-dependent oxidation of the methyl group to an iminium species followed by electrophilic attack on the deprotonated phenol. The chain is ATP-grasp enzyme fsqD from Aspergillus fumigatus (strain ATCC MYA-4609 / CBS 101355 / FGSC A1100 / Af293) (Neosartorya fumigata).